The sequence spans 616 residues: Pyrophosphate--fructose 6-phosphate 1-phosphotransferase subunit alpha (616 aa).

The protein belongs to the phosphofructokinase type A (PFKA) family. PPi-dependent PFK group II subfamily. Clade 'Long' sub-subfamily. Tetramer of two alpha (regulatory) and two beta (catalytic) chains.

It localises to the cytoplasm. The protein operates within carbohydrate degradation; glycolysis; D-glyceraldehyde 3-phosphate and glycerone phosphate from D-glucose: step 3/4. With respect to regulation, allosterically activated by fructose 2,6-bisphosphate. Its function is as follows. Regulatory subunit of pyrophosphate--fructose 6-phosphate 1-phosphotransferase. The polypeptide is Pyrophosphate--fructose 6-phosphate 1-phosphotransferase subunit alpha (Solanum tuberosum (Potato)).